The primary structure comprises 1171 residues: ATP-dependent helicase/deoxyribonuclease subunit B (1171 aa).

A UvrD-like helicase ATP-binding domain is found at 1 to 301 (MSLRFVIGRA…AHLEMHYEAR (301 aa)). 8-15 (GRAGSGKS) serves as a coordination point for ATP. Residues 281-587 (MKQPRFHSQA…QFANIPPSLD (307 aa)) form the UvrD-like helicase C-terminal domain. [4Fe-4S] cluster is bound by residues Cys-805, Cys-1129, Cys-1132, and Cys-1138.

The protein belongs to the helicase family. AddB/RexB type 1 subfamily. In terms of assembly, heterodimer of AddA and AddB. The cofactor is Mg(2+). Requires [4Fe-4S] cluster as cofactor.

In terms of biological role, the heterodimer acts as both an ATP-dependent DNA helicase and an ATP-dependent, dual-direction single-stranded exonuclease. Recognizes the chi site generating a DNA molecule suitable for the initiation of homologous recombination. The AddB subunit has 5' -&gt; 3' nuclease activity but not helicase activity. The chain is ATP-dependent helicase/deoxyribonuclease subunit B from Bacillus mycoides (strain KBAB4) (Bacillus weihenstephanensis).